A 138-amino-acid chain; its full sequence is Cysteine desulfuration protein SufE (138 aa).

Catalysis depends on C51, which acts as the Cysteine persulfide intermediate.

This sequence belongs to the SufE family. As to quaternary structure, homodimer. Interacts with SufS.

It is found in the cytoplasm. The protein operates within cofactor biosynthesis; iron-sulfur cluster biosynthesis. Functionally, participates in cysteine desulfuration mediated by SufS. Cysteine desulfuration mobilizes sulfur from L-cysteine to yield L-alanine and constitutes an essential step in sulfur metabolism for biosynthesis of a variety of sulfur-containing biomolecules. Functions as a sulfur acceptor for SufS, by mediating the direct transfer of the sulfur atom from the S-sulfanylcysteine of SufS, an intermediate product of cysteine desulfuration process. The polypeptide is Cysteine desulfuration protein SufE (Shigella boydii serotype 18 (strain CDC 3083-94 / BS512)).